Consider the following 485-residue polypeptide: Alpha,alpha-trehalose-phosphate synthase [UDP-forming] (485 aa).

The D-glucose 6-phosphate site is built by tyrosine 99 and aspartate 153. Positions 290 and 295 each coordinate UDP. The UDP-alpha-D-glucose site is built by arginine 290 and lysine 295. A D-glucose 6-phosphate-binding site is contributed by arginine 328. UDP contacts are provided by residues isoleucine 367 and 393–397 (LVSYE). Residues isoleucine 367 and 389 to 397 (DGMNLVSYE) each bind UDP-alpha-D-glucose.

It belongs to the glycosyltransferase 20 family.

It catalyses the reaction D-glucose 6-phosphate + UDP-alpha-D-glucose = alpha,alpha-trehalose 6-phosphate + UDP + H(+). It functions in the pathway carbohydrate biosynthesis. Synthase catalytic subunit of the trehalose synthase complex that catalyzes the production of trehalose from glucose-6-phosphate and UDP-alpha-D-glucose in a two step process. This chain is Alpha,alpha-trehalose-phosphate synthase [UDP-forming], found in Zygosaccharomyces rouxii.